Reading from the N-terminus, the 704-residue chain is Protein NBR1 homolog (704 aa).

Position 1 is an N-acetylmethionine (Met-1). Residues Ala-7–Gly-92 form the PB1 domain. Composition is skewed to polar residues over residues Thr-95–Pro-108, Pro-171–Ser-189, and His-223–Ser-233. Disordered regions lie at residues Thr-95–Pro-114 and Pro-171–Ser-233. The segment at His-286 to Ser-336 adopts a ZZ-type; degenerate zinc-finger fold. Residues Cys-291, Cys-294, Cys-315, and Cys-318 each coordinate Zn(2+). The 45-residue stretch at Gly-657–Glu-701 folds into the UBA domain. The short motif at Trp-661–Ile-664 is the LIR element.

Homodimer. Interacts with ATG8A, ATG8B, ATG8C, ATG8D, ATG8F and ATG8I. Binds to ubiquitin.

The protein resides in the cytoplasm. The protein localises to the vacuole. Its function is as follows. Autophagic substrate degraded in the vacuole by non-selective autophagy. Requires ATG8 protein expression to be recognized as an autophagic substrate. Acts probably as a receptor for autophagosomal degradation of ubiquitinated proteins. Targets ubiquitinated protein aggregates derived from denatured or damaged non-native proteins generated under stress conditions. Functions additively with the E3 ubiquitin-protein ligase CHIP for autophagosomal degradation of proteotoxic aggregates formed under stress conditions. This Arabidopsis thaliana (Mouse-ear cress) protein is Protein NBR1 homolog.